Consider the following 504-residue polypeptide: MQSRRPVMLVILDGWGWREDPADNAVLQAKTPTFDALWTNGPHAFLRTSGKSVGLPNGQMGNSEVGHLNIGAGRVVMQDLPRISDAIANGEIERAPGLVAFIDKLKASGGTCHLMGLVSPGGVHSLQDHACALAKILAKAGVKTVLHAFTDGRDTPPKSAVDDIVRLRAELPPNVPIATVSGRYYAMDRDNRWERVSKAYGVIADADGPRFADANAVIADGYAAGVNDEFIVPAVIGDYQGMRDGDGVLCFNFRADRVREILAALLDSAFAGFPRKQVKQIAAAAGMTQYSTALDALMGTIFPPQSLVNGLGQVVADAGLHQLRMAETEKYPHVTYFLNGGEEVPYPGEDRIMVPSPKVATYDLQPEMSAPELGDKAVAAIESGKYDLIVLNFANPDMVGHTGSLPAAIKAVETVDTQLGHIVAAIRKAGGALLVTADHGNCEMMRDPETGGPHTAHTTNPVPVLLVGDNGPLADGQLSDLAPTLLKLMELPQPAEMTGKSLIG.

Residues aspartate 13 and serine 63 each coordinate Mn(2+). The active-site Phosphoserine intermediate is serine 63. Substrate-binding positions include histidine 124, 153–154 (RD), arginine 183, arginine 189, 254–257 (RADR), and lysine 330. Mn(2+)-binding residues include aspartate 397, histidine 401, aspartate 438, histidine 439, and histidine 457.

It belongs to the BPG-independent phosphoglycerate mutase family. In terms of assembly, monomer. The cofactor is Mn(2+).

It catalyses the reaction (2R)-2-phosphoglycerate = (2R)-3-phosphoglycerate. It functions in the pathway carbohydrate degradation; glycolysis; pyruvate from D-glyceraldehyde 3-phosphate: step 3/5. In terms of biological role, catalyzes the interconversion of 2-phosphoglycerate and 3-phosphoglycerate. The chain is 2,3-bisphosphoglycerate-independent phosphoglycerate mutase from Rhodopseudomonas palustris (strain ATCC BAA-98 / CGA009).